The following is a 370-amino-acid chain: Cobalt-precorrin-5B C(1)-methyltransferase (370 aa).

Belongs to the CbiD family.

It carries out the reaction Co-precorrin-5B + S-adenosyl-L-methionine = Co-precorrin-6A + S-adenosyl-L-homocysteine. It participates in cofactor biosynthesis; adenosylcobalamin biosynthesis; cob(II)yrinate a,c-diamide from sirohydrochlorin (anaerobic route): step 6/10. Catalyzes the methylation of C-1 in cobalt-precorrin-5B to form cobalt-precorrin-6A. The protein is Cobalt-precorrin-5B C(1)-methyltransferase of Prochlorococcus marinus (strain MIT 9215).